Reading from the N-terminus, the 527-residue chain is Bifunctional purine biosynthesis protein PurH (527 aa).

An MGS-like domain is found at 1–144 (MNRRALISVS…KNHESVAIIV (144 aa)).

It belongs to the PurH family.

It catalyses the reaction (6R)-10-formyltetrahydrofolate + 5-amino-1-(5-phospho-beta-D-ribosyl)imidazole-4-carboxamide = 5-formamido-1-(5-phospho-D-ribosyl)imidazole-4-carboxamide + (6S)-5,6,7,8-tetrahydrofolate. The enzyme catalyses IMP + H2O = 5-formamido-1-(5-phospho-D-ribosyl)imidazole-4-carboxamide. It functions in the pathway purine metabolism; IMP biosynthesis via de novo pathway; 5-formamido-1-(5-phospho-D-ribosyl)imidazole-4-carboxamide from 5-amino-1-(5-phospho-D-ribosyl)imidazole-4-carboxamide (10-formyl THF route): step 1/1. Its pathway is purine metabolism; IMP biosynthesis via de novo pathway; IMP from 5-formamido-1-(5-phospho-D-ribosyl)imidazole-4-carboxamide: step 1/1. The sequence is that of Bifunctional purine biosynthesis protein PurH from Heliobacterium modesticaldum (strain ATCC 51547 / Ice1).